The primary structure comprises 228 residues: Small ribosomal subunit protein uS3 (228 aa).

Residues 39-107 (TREYLQDKLK…PVHINIEEIR (69 aa)) form the KH type-2 domain.

It belongs to the universal ribosomal protein uS3 family. Part of the 30S ribosomal subunit. Forms a tight complex with proteins S10 and S14.

Binds the lower part of the 30S subunit head. Binds mRNA in the 70S ribosome, positioning it for translation. The polypeptide is Small ribosomal subunit protein uS3 (Pseudomonas entomophila (strain L48)).